The sequence spans 547 residues: ATP-dependent RNA helicase ROK1 (547 aa).

Positions 111-139 match the Q motif motif; the sequence is DLITRFNLHPYLLANLKKNKYTDPTPIQC. The Helicase ATP-binding domain occupies 142 to 324; sequence IPTMLNGRDL…NSIMSTDPLR (183 aa). 155–162 serves as a coordination point for ATP; that stretch reads APTGSGKT. Positions 272 to 275 match the DEAD box motif; it reads DEAD. Positions 336–498 constitute a Helicase C-terminal domain; that stretch reads TVEQKLVYAG…EVPDWLNNLA (163 aa). The segment at 511–547 is disordered; it reads RPIKRKKISTQHALANNKKKRAKQQMKGLKKMKKDDE. Residues 527-547 show a composition bias toward basic residues; sequence NKKKRAKQQMKGLKKMKKDDE.

This sequence belongs to the DEAD box helicase family. DDX52/ROK1 subfamily. Interacts with the U3 snoRNA and is associated with the 90S and 40S pre-ribosomes.

Its subcellular location is the nucleus. It localises to the nucleolus. The catalysed reaction is ATP + H2O = ADP + phosphate + H(+). In terms of biological role, ATP-dependent RNA helicase involved in 40S ribosomal subunit biogenesis. Required for the processing and cleavage of 35S pre-rRNA at sites A0, A1, and A2, leading to mature 18S rRNA. This Yarrowia lipolytica (strain CLIB 122 / E 150) (Yeast) protein is ATP-dependent RNA helicase ROK1 (ROK1).